A 509-amino-acid polypeptide reads, in one-letter code: Probable malate:quinone oxidoreductase (509 aa).

Positions 490-509 are disordered; it reads LGLNEKEPVSGASEKELVYS. Residues 493–509 are compositionally biased toward basic and acidic residues; it reads NEKEPVSGASEKELVYS.

This sequence belongs to the MQO family. Requires FAD as cofactor.

The catalysed reaction is (S)-malate + a quinone = a quinol + oxaloacetate. It functions in the pathway carbohydrate metabolism; tricarboxylic acid cycle; oxaloacetate from (S)-malate (quinone route): step 1/1. This Geobacillus sp. (strain WCH70) protein is Probable malate:quinone oxidoreductase.